The sequence spans 339 residues: Anthranilate phosphoribosyltransferase (339 aa).

Residues G82, 85–86 (GD), 92–95 (NIST), 110–118 (KHGNRGISS), and S122 contribute to the 5-phospho-alpha-D-ribose 1-diphosphate site. G82 contacts anthranilate. Position 94 (S94) interacts with Mg(2+). N113 contributes to the anthranilate binding site. Residue R168 coordinates anthranilate. D227 and E228 together coordinate Mg(2+).

It belongs to the anthranilate phosphoribosyltransferase family. Homodimer. The cofactor is Mg(2+).

It catalyses the reaction N-(5-phospho-beta-D-ribosyl)anthranilate + diphosphate = 5-phospho-alpha-D-ribose 1-diphosphate + anthranilate. It functions in the pathway amino-acid biosynthesis; L-tryptophan biosynthesis; L-tryptophan from chorismate: step 2/5. Functionally, catalyzes the transfer of the phosphoribosyl group of 5-phosphorylribose-1-pyrophosphate (PRPP) to anthranilate to yield N-(5'-phosphoribosyl)-anthranilate (PRA). This chain is Anthranilate phosphoribosyltransferase, found in Vesicomyosocius okutanii subsp. Calyptogena okutanii (strain HA).